Here is a 112-residue protein sequence, read N- to C-terminus: Protein BEX3 (112 aa).

Positions 1-45 are disordered; that stretch reads MANIHQENEEMEQPVQNGEEDRPLGGGEGHQPERNHRRGQARRLA. The segment at 69 to 94 is interaction with p75NTR/NGFR; the sequence is EIFMEEMREIRRKLRELQLRNCLRIL. The interaction with 14-3-3 epsilon stretch occupies residues 69–112; that stretch reads EIFMEEMREIRRKLRELQLRNCLRILMGELSNHHDHHDEFCLMP. The short motif at 78–88 is the Nuclear export signal element; sequence IRRKLRELQLR. Residues 101–105 are his cluster; that stretch reads HHDHH. Cys-109 lines the Zn(2+) pocket.

Belongs to the BEX family. In terms of assembly, self-associates. Binds to the DEATH domain of p75NTR/NGFR. Interacts with 14-3-3 epsilon (YWHAE). Interacts with DIABLO/SMAC. In terms of processing, ubiquitinated. Degraded by the proteasome.

It localises to the nucleus. The protein localises to the cytoplasm. The protein resides in the cytosol. May be a signaling adapter molecule involved in NGFR/p75NTR-mediated apoptosis induced by NGF. Plays a role in zinc-triggered neuronal death. In absence of reductive stress, acts as a pseudosubstrate for the CRL2(FEM1B) complex: associates with FEM1B via zinc, thereby preventing association between FEM1B and its substrates. This is Protein BEX3 from Bos taurus (Bovine).